The chain runs to 515 residues: 1-pyrroline-5-carboxylate dehydrogenase (515 aa).

Catalysis depends on residues Glu-286 and Cys-320.

This sequence belongs to the aldehyde dehydrogenase family. RocA subfamily.

It carries out the reaction L-glutamate 5-semialdehyde + NAD(+) + H2O = L-glutamate + NADH + 2 H(+). It participates in amino-acid degradation; L-proline degradation into L-glutamate; L-glutamate from L-proline: step 2/2. In Anoxybacillus flavithermus (strain DSM 21510 / WK1), this protein is 1-pyrroline-5-carboxylate dehydrogenase.